A 944-amino-acid polypeptide reads, in one-letter code: Isoleucine--tRNA ligase (944 aa).

The 'HIGH' region motif lies at 58 to 68 (PYANGDIHIGH). Position 568 (Glu568) interacts with L-isoleucyl-5'-AMP. The 'KMSKS' region motif lies at 609–613 (KMSKS). Lys612 contributes to the ATP binding site. Residues Cys907, Cys910, Cys927, and Cys930 each coordinate Zn(2+).

The protein belongs to the class-I aminoacyl-tRNA synthetase family. IleS type 1 subfamily. Monomer. It depends on Zn(2+) as a cofactor.

Its subcellular location is the cytoplasm. It carries out the reaction tRNA(Ile) + L-isoleucine + ATP = L-isoleucyl-tRNA(Ile) + AMP + diphosphate. Functionally, catalyzes the attachment of isoleucine to tRNA(Ile). As IleRS can inadvertently accommodate and process structurally similar amino acids such as valine, to avoid such errors it has two additional distinct tRNA(Ile)-dependent editing activities. One activity is designated as 'pretransfer' editing and involves the hydrolysis of activated Val-AMP. The other activity is designated 'posttransfer' editing and involves deacylation of mischarged Val-tRNA(Ile). The protein is Isoleucine--tRNA ligase of Psychromonas ingrahamii (strain DSM 17664 / CCUG 51855 / 37).